Here is a 458-residue protein sequence, read N- to C-terminus: MPN domain-containing protein (458 aa).

The tract at residues 1 to 37 (MGSEPPSSPQVVEEGADEEDEELSGAEDADLRSSSGR) is disordered. Positions 14–28 (EGADEEDEELSGAED) are enriched in acidic residues. Residues 42-137 (TRRGITLRVL…QYKTTWLHKY (96 aa)) form the RAMA domain. 3 residues coordinate DNA: serine 94, serine 96, and tryptophan 116. A disordered region spans residues 147-175 (SEGEDDEMGDDDEEEGKTTIPVEDKNKKS). Residues 148-161 (EGEDDEMGDDDEEE) are compositionally biased toward acidic residues. Residues 229 to 364 (VAVSSNVLLL…VASTITPFWV (136 aa)) enclose the MPN domain. Positions 306, 308, and 319 each coordinate Zn(2+). The JAMM motif motif lies at 306–319 (HSHPRGPALPSLQD).

Belongs to the peptidase M67 family. In terms of processing, degraded following binding to N(6)-methyladenosine methylated DNA (m6A).

Probable protease. Acts as a sensor of N(6)-methyladenosine methylation on DNA (m6A): recognizes and binds m6A DNA, leading to its degradation. Binds only double strand DNA (dsDNA) in a sequence-independent manner. In Danio rerio (Zebrafish), this protein is MPN domain-containing protein.